The chain runs to 373 residues: Queuine tRNA-ribosyltransferase (373 aa).

The active-site Proton acceptor is Asp89. Substrate-binding positions include 89-93 (DSGGF), Asp143, Gln185, and Gly212. The interval 243–249 (GVGRPED) is RNA binding. Catalysis depends on Asp262, which acts as the Nucleophile. The RNA binding; important for wobble base 34 recognition stretch occupies residues 267-271 (TRNAR). Residues Cys300, Cys302, Cys305, and His331 each coordinate Zn(2+).

Belongs to the queuine tRNA-ribosyltransferase family. Homodimer. Within each dimer, one monomer is responsible for RNA recognition and catalysis, while the other monomer binds to the replacement base PreQ1. Zn(2+) is required as a cofactor.

It catalyses the reaction 7-aminomethyl-7-carbaguanine + guanosine(34) in tRNA = 7-aminomethyl-7-carbaguanosine(34) in tRNA + guanine. The protein operates within tRNA modification; tRNA-queuosine biosynthesis. Functionally, catalyzes the base-exchange of a guanine (G) residue with the queuine precursor 7-aminomethyl-7-deazaguanine (PreQ1) at position 34 (anticodon wobble position) in tRNAs with GU(N) anticodons (tRNA-Asp, -Asn, -His and -Tyr). Catalysis occurs through a double-displacement mechanism. The nucleophile active site attacks the C1' of nucleotide 34 to detach the guanine base from the RNA, forming a covalent enzyme-RNA intermediate. The proton acceptor active site deprotonates the incoming PreQ1, allowing a nucleophilic attack on the C1' of the ribose to form the product. After dissociation, two additional enzymatic reactions on the tRNA convert PreQ1 to queuine (Q), resulting in the hypermodified nucleoside queuosine (7-(((4,5-cis-dihydroxy-2-cyclopenten-1-yl)amino)methyl)-7-deazaguanosine). The sequence is that of Queuine tRNA-ribosyltransferase from Marinobacter nauticus (strain ATCC 700491 / DSM 11845 / VT8) (Marinobacter aquaeolei).